Reading from the N-terminus, the 581-residue chain is Alpha-amylase 2 (581 aa).

The N-terminal stretch at 1-24 (MNYRRNICLRIGWMLLFAFIPAYA) is a signal peptide. C56 and C64 are joined by a disulfide. W109 provides a ligand contact to substrate. N147 contributes to the Ca(2+) binding site. C176 and C191 are disulfide-bonded. D202 contributes to the Ca(2+) binding site. R231 lines the substrate pocket. D233, H237, and E257 together coordinate Ca(2+). The active-site Nucleophile is the D233. 236 to 237 (KH) contributes to the substrate binding site. The active-site Proton donor is the E257. Residue G261 participates in substrate binding. The cysteines at positions 267 and 311 are disulfide-linked. N-linked (GlcNAc...) asparagine glycosylation occurs at N291. Residue D325 coordinates substrate. N332 carries N-linked (GlcNAc...) asparagine glycosylation. Substrate is bound at residue R372. A lipid anchor (GPI-anchor amidated serine) is attached at S551. Positions 552–581 (EAKTIRSFTKLKLFILLIAVPFALPMIILI) are cleaved as a propeptide — removed in mature form.

Belongs to the glycosyl hydrolase 13 family. Requires Ca(2+) as cofactor.

It is found in the cell membrane. The enzyme catalyses Endohydrolysis of (1-&gt;4)-alpha-D-glucosidic linkages in polysaccharides containing three or more (1-&gt;4)-alpha-linked D-glucose units.. The sequence is that of Alpha-amylase 2 (aah2) from Schizosaccharomyces pombe (strain 972 / ATCC 24843) (Fission yeast).